Here is a 239-residue protein sequence, read N- to C-terminus: DNA repair protein RecO (239 aa).

This sequence belongs to the RecO family.

In terms of biological role, involved in DNA repair and RecF pathway recombination. This Tolumonas auensis (strain DSM 9187 / NBRC 110442 / TA 4) protein is DNA repair protein RecO.